A 149-amino-acid chain; its full sequence is Ribonuclease pancreatic (149 aa).

The signal sequence occupies residues 1–25 (MGLEKSLMLFPLFVLLLGWVQPSLG). The interval 30–49 (AQKFQRQHMDPAGSSSNSPT) is disordered. Substrate contacts are provided by lysine 32 and arginine 35. Histidine 37 functions as the Proton acceptor in the catalytic mechanism. 4 cysteine pairs are disulfide-bonded: cysteine 51–cysteine 109, cysteine 65–cysteine 120, cysteine 83–cysteine 135, and cysteine 90–cysteine 97. 66 to 70 (KPVNT) contacts substrate. Asparagine 87 carries an N-linked (GlcNAc...) asparagine glycan. Lysine 91 lines the substrate pocket. The active-site Proton donor is histidine 144.

The protein belongs to the pancreatic ribonuclease family. As to quaternary structure, monomer. Interacts with and forms tight 1:1 complexes with RNH1. Dimerization of two such complexes may occur. Interaction with RNH1 inhibits this protein. In terms of tissue distribution, pancreas.

It localises to the secreted. The enzyme catalyses an [RNA] containing cytidine + H2O = an [RNA]-3'-cytidine-3'-phosphate + a 5'-hydroxy-ribonucleotide-3'-[RNA].. It catalyses the reaction an [RNA] containing uridine + H2O = an [RNA]-3'-uridine-3'-phosphate + a 5'-hydroxy-ribonucleotide-3'-[RNA].. Functionally, endonuclease that catalyzes the cleavage of RNA on the 3' side of pyrimidine nucleotides. Acts on single-stranded and double-stranded RNA. In Mus saxicola (Brown spiny mouse), this protein is Ribonuclease pancreatic (Rnase1).